A 302-amino-acid polypeptide reads, in one-letter code: Small ribosomal subunit biogenesis GTPase RsgA (302 aa).

One can recognise a CP-type G domain in the interval 69 to 229; it reads KNLLIRPKVA…VGDTPGFSKV (161 aa). GTP is bound by residues 118–121 and 172–180; these read NKID and GPSGVGKSS. Zn(2+) contacts are provided by Cys-252, Cys-257, His-259, and Cys-265.

This sequence belongs to the TRAFAC class YlqF/YawG GTPase family. RsgA subfamily. As to quaternary structure, monomer. Associates with 30S ribosomal subunit, binds 16S rRNA. Zn(2+) is required as a cofactor.

Its subcellular location is the cytoplasm. Its function is as follows. One of several proteins that assist in the late maturation steps of the functional core of the 30S ribosomal subunit. Helps release RbfA from mature subunits. May play a role in the assembly of ribosomal proteins into the subunit. Circularly permuted GTPase that catalyzes slow GTP hydrolysis, GTPase activity is stimulated by the 30S ribosomal subunit. The chain is Small ribosomal subunit biogenesis GTPase RsgA from Aquifex aeolicus (strain VF5).